The primary structure comprises 187 residues: uncharacterized protein (187 aa).

The first 25 residues, 1 to 25, serve as a signal peptide directing secretion; sequence MSKFVKTAIAAAMVMGAFTSTATIA.

This sequence belongs to the fimbrial protein family.

Its function is as follows. Part of the yfcOPQRSUV fimbrial operon. Could contribute to adhesion to various surfaces in specific environmental niches. Increases adhesion to eukaryotic T24 bladder epithelial cells in the absence of fim genes. This is an uncharacterized protein from Escherichia coli (strain K12).